A 219-amino-acid polypeptide reads, in one-letter code: ATP synthase subunit a (219 aa).

Helical transmembrane passes span 16-36, 57-79, 96-116, 122-142, 158-178, and 184-204; these read LSNW…FWLI, LLMG…FILF, LAVT…YTWI, ALAH…MVLM, LAAN…QGTL, and TSIV…VAII.

This sequence belongs to the ATPase A chain family. F-type ATPases have 2 components, CF(1) - the catalytic core - and CF(0) - the membrane proton channel. CF(1) has five subunits: alpha(3), beta(3), gamma(1), delta(1), epsilon(1). CF(0) has three main subunits: a, b and c.

It is found in the mitochondrion inner membrane. Its function is as follows. Mitochondrial membrane ATP synthase (F(1)F(0) ATP synthase or Complex V) produces ATP from ADP in the presence of a proton gradient across the membrane which is generated by electron transport complexes of the respiratory chain. F-type ATPases consist of two structural domains, F(1) - containing the extramembraneous catalytic core and F(0) - containing the membrane proton channel, linked together by a central stalk and a peripheral stalk. During catalysis, ATP synthesis in the catalytic domain of F(1) is coupled via a rotary mechanism of the central stalk subunits to proton translocation. Key component of the proton channel; it may play a direct role in the translocation of protons across the membrane. The chain is ATP synthase subunit a (ATP6) from Artemia franciscana (Brine shrimp).